Consider the following 81-residue polypeptide: Photosystem I iron-sulfur center (81 aa).

4Fe-4S ferredoxin-type domains lie at 2–31 and 39–68; these read AHSVKIYATCIGCTQCVRACPTDVLEMVPW and IASAPRTEDCVGCKRCESACPTDFLSVRVY. Residues C11, C14, C17, C21, C48, C51, C54, and C58 each contribute to the [4Fe-4S] cluster site.

As to quaternary structure, the eukaryotic PSI reaction center is composed of at least 11 subunits. [4Fe-4S] cluster serves as cofactor.

It is found in the plastid. It localises to the chloroplast thylakoid membrane. It catalyses the reaction reduced [plastocyanin] + hnu + oxidized [2Fe-2S]-[ferredoxin] = oxidized [plastocyanin] + reduced [2Fe-2S]-[ferredoxin]. In terms of biological role, apoprotein for the two 4Fe-4S centers FA and FB of photosystem I (PSI); essential for photochemical activity. FB is the terminal electron acceptor of PSI, donating electrons to ferredoxin. The C-terminus interacts with PsaA/B/D and helps assemble the protein into the PSI complex. Required for binding of PsaD and PsaE to PSI. PSI is a plastocyanin-ferredoxin oxidoreductase, converting photonic excitation into a charge separation, which transfers an electron from the donor P700 chlorophyll pair to the spectroscopically characterized acceptors A0, A1, FX, FA and FB in turn. The polypeptide is Photosystem I iron-sulfur center (Mesostigma viride (Green alga)).